A 110-amino-acid chain; its full sequence is Integration host factor subunit beta (110 aa).

Belongs to the bacterial histone-like protein family. In terms of assembly, heterodimer of an alpha and a beta chain.

In terms of biological role, this protein is one of the two subunits of integration host factor, a specific DNA-binding protein that functions in genetic recombination as well as in transcriptional and translational control. This chain is Integration host factor subunit beta, found in Parvibaculum lavamentivorans (strain DS-1 / DSM 13023 / NCIMB 13966).